Here is a 225-residue protein sequence, read N- to C-terminus: Myelin-associated neurite-outgrowth inhibitor (225 aa).

Residues 1-58 lie on the Cytoplasmic side of the membrane; it reads MNPVYSPGSSGVPYANAKGIGYPAGFPMGYAAAAPAYSPNMYAGPNPAFQQELEHPAH. Residues 59–75 traverse the membrane as a helical segment; the sequence is VSSGVQMFMFGHAFSVA. The Extracellular portion of the chain corresponds to 76-173; sequence RNGAIPSGYT…PAPIQSPRGN (98 aa). Residues 174–193 traverse the membrane as a helical segment; that stretch reads GVAMGMVAGTTMAMSAGTLL. Over 194–225 the chain is Cytoplasmic; sequence TSHYPSPVAPQVTMPTYRPPGTPTYSYVPPQW.

It belongs to the FAM168 family.

The protein localises to the cytoplasm. Its subcellular location is the perinuclear region. It is found in the cell membrane. It localises to the cell projection. The protein resides in the axon. Its function is as follows. Inhibitor of neuronal axonal outgrowth. The sequence is that of Myelin-associated neurite-outgrowth inhibitor (fam168b) from Xenopus laevis (African clawed frog).